A 396-amino-acid polypeptide reads, in one-letter code: Ribosomal RNA large subunit methyltransferase I (396 aa).

The 80-residue stretch at 2–81 (TVRLILAKGR…EVIDCAFFIR (80 aa)) folds into the PUA domain.

This sequence belongs to the methyltransferase superfamily. RlmI family.

Its subcellular location is the cytoplasm. The enzyme catalyses cytidine(1962) in 23S rRNA + S-adenosyl-L-methionine = 5-methylcytidine(1962) in 23S rRNA + S-adenosyl-L-homocysteine + H(+). Functionally, specifically methylates the cytosine at position 1962 (m5C1962) of 23S rRNA. This is Ribosomal RNA large subunit methyltransferase I from Yersinia pseudotuberculosis serotype O:1b (strain IP 31758).